The chain runs to 162 residues: NADH-quinone oxidoreductase subunit I (162 aa).

4Fe-4S ferredoxin-type domains follow at residues 53 to 83 (LRRY…IESE) and 93 to 122 (TRYD…ETHI). Positions 63, 66, 69, 73, 102, 105, 108, and 112 each coordinate [4Fe-4S] cluster.

The protein belongs to the complex I 23 kDa subunit family. As to quaternary structure, NDH-1 is composed of 14 different subunits. Subunits NuoA, H, J, K, L, M, N constitute the membrane sector of the complex. The cofactor is [4Fe-4S] cluster.

It localises to the cell inner membrane. The catalysed reaction is a quinone + NADH + 5 H(+)(in) = a quinol + NAD(+) + 4 H(+)(out). Its function is as follows. NDH-1 shuttles electrons from NADH, via FMN and iron-sulfur (Fe-S) centers, to quinones in the respiratory chain. The immediate electron acceptor for the enzyme in this species is believed to be ubiquinone. Couples the redox reaction to proton translocation (for every two electrons transferred, four hydrogen ions are translocated across the cytoplasmic membrane), and thus conserves the redox energy in a proton gradient. The chain is NADH-quinone oxidoreductase subunit I from Bordetella bronchiseptica (strain ATCC BAA-588 / NCTC 13252 / RB50) (Alcaligenes bronchisepticus).